A 52-amino-acid polypeptide reads, in one-letter code: Small ribosomal subunit protein uS14 (52 aa).

Residues Cys-17, Cys-20, Cys-35, and Cys-38 each contribute to the Zn(2+) site.

This sequence belongs to the universal ribosomal protein uS14 family. Zinc-binding uS14 subfamily. Part of the 30S ribosomal subunit. Zn(2+) serves as cofactor.

Its function is as follows. Binds 16S rRNA, required for the assembly of 30S particles. In Halobacterium salinarum (strain ATCC 700922 / JCM 11081 / NRC-1) (Halobacterium halobium), this protein is Small ribosomal subunit protein uS14.